Consider the following 1708-residue polypeptide: MAAANAPIAMREALTLTSLGIAPQFVTFTHVTMESEKYICVRETSPQNSVVIVDMAMPAQPLRRPITADSALMNPNTRILALKAQIPGTTQDHLQIFNIEAKTKIKSHQMPEQVVFWKWITPKLLGLVTQTSVYHWSIEGDSEPAKMFDRTANLANNQIINYRCDPSEKWLVLIGIAPGAPERPQLVKGNMQLFSVDQQRSQALEAHAASFASFKVVGNENPSTLICFASKTTNAGQITSKLHVIELGAQPGKPGFSKKQADLFFPPDFQDDFPVAMQISQKYGLIYVITKLGLLFVYDLETAAAVYRNRISPDPIFLTAESSASGGFYAINRRGQVLHATVNDATIVPFVSSQLNNLELAVNLAKRANLPGAENLVVQRFQELFAQTKYKEAAELAAESPQGLLRTPETVAKFQSVPVQAGQTPPLLQYFGTLLTRGKLNAYESLELSRLVVNQNKKNLLENWLAEDKLECSEELGDLVKTVDNDLALKIYIKARATPKVVAAFAERREFDKILIYSKQVGYTPDYLFLLQTILRTDPQGAVNFALMMSQMEGGCPVDYNTITDLFLQRNMIREATAFLLDVLKPNLPEHAFLQTKVLEINLVTYPNVADAILANGMFSHYDRPRVAQLCEKAGLYLRALQHYTELPDIKRVMVNTHAIEPQALVEFFGTLSREWALECMKDLLLVNLRGNLQIVVQAAKEYSEQLGVDACIKLFEQFKSYEGLYFFLGAYLSSSEDPDIHFKYIEAAARTGQIKEVERVTRESNFYDAEKTKNFLMEAKLPDARPLINVCDRFGFVPDLTHYLYTNNMLRYIEGYVQKVNPGNAPLVVGQLLDDECPEDFIKGLILSVRSLLPVEPLVDECEKRNRLRLLTQFLEHLVSEGSQDVHVHNALGKIIIDSNNNPEHFLTTNPFYDSRVVGKYCEKRDPTLAVVAYRRGQCDDELINVTNKNSLFKLQARYVVERMDGDLWDKVLQPENEYRRQLIDQVVSTALPESKSPEQVSAAVKAFMTADLPHELIELLEKIVLQNSAFSGNFNLQNLLILTAIKADPSRVMDYVNRLDNFDGPAVGEVAVEAQLFEEAFAIFKKFNLNVQAVNVLLDNIRSIERAEEFAFRVEEDAVWSQVAKAQLREGLVSEAIESFIRADDATHFLDVIRAAEEANVYDDLVKYLLMVRQKAREPKVDGELIFAYAKIDRLSDIEEFILMPNVANLQNVGDRLYDEELYEAAKIIYAFISNWAKLAVTLVKLKQFQGAVDAARKANSAKTWKEVCFACVDAEEFRLAQICGLNIIVQVDDLEEVSEYYQNRGCFNELISLMESGLGLERAHMGIFTELGVLYARYRPEKLMEHIKLFSTRLNIPKLIRACDEQQHWKELTYLYIQYDEFDNAATTIMNHSPDAWDHMQFKDVAVKVANVELYYKAVHFYLQEHPDLINDLLNVLALRLDHTRVVDIMRKAGQLHLVKPYMVAVQSNNVSAVNEALNELYVEEEDYERLRESVDMHDNFDQIGLAQKLEKHELLEMRRIAAYIYKKAGRWKQSIALSKKDNMYKDCMETCSQSGDRELSEDLLVYFIEQGKKECFASCLFICYDLIRADVALELAWMNNMVDFAFPYLLQFIREYTSKVDELVKDRIESQNEVRAKEKEEKDLVAQQNMYAQLLPLALPAPPGMGGPPPPMGMPGMPPMGGMGMPPMGPGPMPAYGMPPMGSY.

Residues 1-492 are globular terminal domain; that stretch reads MAAANAPIAM…VDNDLALKIY (492 aa). WD40-like repeat regions lie at residues 25–67, 68–113, 114–155, 156–205, 206–270, 271–314, and 315–343; these read FVTF…RPIT, ADSA…MPEQ, VVFW…ANLA, NNQI…QALE, AHAA…PDFQ, DDFP…ISPD, and PIFL…ATVN. A binding site for the uncoating ATPase, involved in lattice disassembly region spans residues 462–478; it reads ENWLAEDKLECSEELGD. A flexible linker region spans residues 493–536; that stretch reads IKARATPKVVAAFAERREFDKILIYSKQVGYTPDYLFLLQTILR. The segment at 537–648 is distal segment; it reads TDPQGAVNFA…RALQHYTELP (112 aa). The interval 537–1708 is heavy chain arm; sequence TDPQGAVNFA…AYGMPPMGSY (1172 aa). 7 CHCR repeats span residues 551-697, 700-842, 847-986, 993-1138, 1142-1283, 1288-1434, and 1437-1580; these read QMEG…QIVV, AKEY…PEDF, ILSV…QLID, LPES…VSEA, FIRA…FRLA, LNII…DLIN, and LNVL…KECF. The proximal segment stretch occupies residues 653-1708; the sequence is VMVNTHAIEP…AYGMPPMGSY (1056 aa). An involved in binding clathrin light chain region spans residues 1227–1536; sequence AAKIIYAFIS…YIYKKAGRWK (310 aa). Positions 1564-1708 are trimerization; that stretch reads SEDLLVYFIE…AYGMPPMGSY (145 aa).

The protein belongs to the clathrin heavy chain family. Clathrin triskelions, composed of 3 heavy chains and 3 light chains, are the basic subunits of the clathrin coat.

The protein localises to the cytoplasmic vesicle membrane. It localises to the membrane. The protein resides in the coated pit. Functionally, clathrin is the major protein of the polyhedral coat of coated pits and vesicles. In Oryza sativa subsp. japonica (Rice), this protein is Clathrin heavy chain 1.